We begin with the raw amino-acid sequence, 312 residues long: DNA primase small subunit PriS (312 aa).

Catalysis depends on residues D88, D90, and D215.

It belongs to the eukaryotic-type primase small subunit family. Heterodimer of a small subunit (PriS) and a large subunit (PriL). It depends on Mg(2+) as a cofactor. The cofactor is Mn(2+).

Catalytic subunit of DNA primase, an RNA polymerase that catalyzes the synthesis of short RNA molecules used as primers for DNA polymerase during DNA replication. The small subunit contains the primase catalytic core and has DNA synthesis activity on its own. Binding to the large subunit stabilizes and modulates the activity, increasing the rate of DNA synthesis while decreasing the length of the DNA fragments, and conferring RNA synthesis capability. The DNA polymerase activity may enable DNA primase to also catalyze primer extension after primer synthesis. May also play a role in DNA repair. In Pyrobaculum calidifontis (strain DSM 21063 / JCM 11548 / VA1), this protein is DNA primase small subunit PriS.